The primary structure comprises 530 residues: RNA-binding protein 39 (530 aa).

A disordered region spans residues 1–146 (MADDIDIEAM…PVREPIDNLT (146 aa)). Ala2 is subject to N-acetylalanine. The span at 14–32 (PYKKDENKLNSANGHEERS) shows a compositional bias: basic and acidic residues. Basic residues-rich tracts occupy residues 33–56 (KKRK…KERK) and 64–95 (KKSK…RGRY). Phosphotyrosine is present on Tyr95. Residues Ser97 and Ser100 each carry the phosphoserine modification. Lys111 is covalently cross-linked (Glycyl lysine isopeptide (Lys-Gly) (interchain with G-Cter in SUMO2)). Position 117 is a phosphoserine (Ser117). Lys119 is covalently cross-linked (Glycyl lysine isopeptide (Lys-Gly) (interchain with G-Cter in SUMO2)). A compositionally biased stretch (basic residues) spans 119–130 (KLSRRRSRSKSP). Residues Ser121 and Ser136 each carry the phosphoserine modification. The segment covering 131 to 146 (FRKDKSPVREPIDNLT) has biased composition (basic and acidic residues). Thr146 bears the Phosphothreonine mark. One can recognise an RRM 1 domain in the interval 153–230 (RTVFCMQLAA…VPIIVQASQA (78 aa)). A Glycyl lysine isopeptide (Lys-Gly) (interchain with G-Cter in SUMO2) cross-link involves residue Lys244. The region spanning 250–328 (MRLYVGSLHF…RPMKVGHVTE (79 aa)) is the RRM 2 domain. Residues 291–355 (KGYGFITFSD…RTGIDLGTTG (65 aa)) form an activating domain region. The interaction with JUN stretch occupies residues 291 to 406 (KGYGFITFSD…IDLQTRLSQQ (116 aa)). Phosphoserine is present on residues Ser334, Ser337, and Ser341. The interval 355-406 (GRLQLMARLAEGTGLQIPPAAQQALQMSGSLAFGAVAEFSFVIDLQTRLSQQ) is interaction with ESR1 and ESR2. An interaction with NCOA6 region spans residues 406 to 530 (QTEASALAAA…ATQLLVPSRR (125 aa)). In terms of domain architecture, RRM 3 spans 445 to 508 (EIKDDVIEEC…KMITAAYVPL (64 aa)).

It belongs to the splicing factor SR family. As to quaternary structure, interacts with NCOA6 and JUN. Interacts with ESR1 and ESR2, in the presence of estradiol (E2). Interacts with RSRC1 (via Arg/Ser-rich domain). Interacts with SF3B1. Interacts with ZNF106 (via N-terminus).

The protein resides in the nucleus. Its function is as follows. RNA-binding protein that acts as a pre-mRNA splicing factor. Acts by promoting exon inclusion via regulation of exon cassette splicing. Also acts as a transcriptional coactivator for steroid nuclear receptors ESR1/ER-alpha and ESR2/ER-beta, and JUN/AP-1, independently of the pre-mRNA splicing factor activity. This is RNA-binding protein 39 (Rbm39) from Mus musculus (Mouse).